Reading from the N-terminus, the 621-residue chain is 1-deoxy-D-xylulose-5-phosphate synthase (621 aa).

Thiamine diphosphate contacts are provided by residues His80 and 121 to 123 (GHS). Asp152 contributes to the Mg(2+) binding site. Residues 153–154 (GA), Asn181, Tyr288, and Glu370 contribute to the thiamine diphosphate site. Asn181 serves as a coordination point for Mg(2+).

It belongs to the transketolase family. DXPS subfamily. In terms of assembly, homodimer. Mg(2+) is required as a cofactor. It depends on thiamine diphosphate as a cofactor.

It carries out the reaction D-glyceraldehyde 3-phosphate + pyruvate + H(+) = 1-deoxy-D-xylulose 5-phosphate + CO2. It functions in the pathway metabolic intermediate biosynthesis; 1-deoxy-D-xylulose 5-phosphate biosynthesis; 1-deoxy-D-xylulose 5-phosphate from D-glyceraldehyde 3-phosphate and pyruvate: step 1/1. Functionally, catalyzes the acyloin condensation reaction between C atoms 2 and 3 of pyruvate and glyceraldehyde 3-phosphate to yield 1-deoxy-D-xylulose-5-phosphate (DXP). The chain is 1-deoxy-D-xylulose-5-phosphate synthase from Edwardsiella ictaluri (strain 93-146).